Here is a 109-residue protein sequence, read N- to C-terminus: FK506-binding protein (109 aa).

In terms of domain architecture, PPIase FKBP-type spans 20–108 (GKEITVHYTG…IFEVELLKVY (89 aa)).

This sequence belongs to the FKBP-type PPIase family.

It catalyses the reaction [protein]-peptidylproline (omega=180) = [protein]-peptidylproline (omega=0). Inhibited by FK506. PPIases accelerate the folding of proteins. The chain is FK506-binding protein (fbp) from Neisseria meningitidis serogroup A / serotype 4A (strain DSM 15465 / Z2491).